A 103-amino-acid polypeptide reads, in one-letter code: Co-chaperonin GroES (103 aa).

This sequence belongs to the GroES chaperonin family. In terms of assembly, heptamer of 7 subunits arranged in a ring. Interacts with the chaperonin GroEL.

Its subcellular location is the cytoplasm. Together with the chaperonin GroEL, plays an essential role in assisting protein folding. The GroEL-GroES system forms a nano-cage that allows encapsulation of the non-native substrate proteins and provides a physical environment optimized to promote and accelerate protein folding. GroES binds to the apical surface of the GroEL ring, thereby capping the opening of the GroEL channel. The sequence is that of Co-chaperonin GroES from Nostoc sp. (strain PCC 7120 / SAG 25.82 / UTEX 2576).